The chain runs to 142 residues: Hemoglobin subunit alpha (142 aa).

Residues 2–142 (VLSAADKSNV…VGTVLTSKYR (141 aa)) enclose the Globin domain. A Phosphoserine modification is found at S4. N6-succinyllysine is present on residues K8 and K12. Residue K17 is modified to N6-acetyllysine; alternate. K17 carries the post-translational modification N6-succinyllysine; alternate. Position 25 is a phosphotyrosine (Y25). Phosphoserine is present on S36. Residue K41 is modified to N6-succinyllysine. S50 is subject to Phosphoserine. H59 serves as a coordination point for O2. A heme b-binding site is contributed by H88. S103 carries the post-translational modification Phosphoserine. T109 carries the phosphothreonine modification. A phosphoserine mark is found at S125 and S132. A phosphothreonine mark is found at T135 and T138. S139 carries the phosphoserine modification.

The protein belongs to the globin family. As to quaternary structure, heterotetramer of two alpha chains and two beta chains. As to expression, red blood cells.

Functionally, involved in oxygen transport from the lung to the various peripheral tissues. In terms of biological role, hemopressin acts as an antagonist peptide of the cannabinoid receptor CNR1. Hemopressin-binding efficiently blocks cannabinoid receptor CNR1 and subsequent signaling. The sequence is that of Hemoglobin subunit alpha (HBA) from Pantholops hodgsonii (Chiru).